A 295-amino-acid polypeptide reads, in one-letter code: MQSTAPHRPPQPSRLALYLDLIRWSRPAGWLLLLWPTLSALWIAAGGFPGWHLLAVFTLGTILMRSAGCCVNDVADRDFDRHVKRTAQRPVTSGAVSVREALGVGAVLALVSFGLVLTTNAATIAWSLPALAVTIAYPFAKRFVSMPQAVLGVAFSMGIPMAFTAVGGAVPMLAAWLVLGNLCWVLAYDTEYAMVDRDDDLKIGMKTSAITLGRHDVPAVMAFYLAFVALWAWALAPFGLGWPLHAVLAAMLLQVAWHWRLIRHRTREGCFRAFTGNHWLGFTLFAGIVAGFALR.

Transmembrane regions (helical) follow at residues 28-48 (AGWL…AGGF), 51-71 (WHLL…GCCV), 101-121 (ALGV…TTNA), 124-144 (IAWS…KRFV), 159-179 (IPMA…WLVL), 220-240 (VMAF…PFGL), 242-262 (WPLH…WRLI), and 274-294 (FTGN…GFAL).

This sequence belongs to the UbiA prenyltransferase family. The cofactor is Mg(2+).

The protein resides in the cell inner membrane. It catalyses the reaction all-trans-octaprenyl diphosphate + 4-hydroxybenzoate = 4-hydroxy-3-(all-trans-octaprenyl)benzoate + diphosphate. The protein operates within cofactor biosynthesis; ubiquinone biosynthesis. In terms of biological role, catalyzes the prenylation of para-hydroxybenzoate (PHB) with an all-trans polyprenyl group. Mediates the second step in the final reaction sequence of ubiquinone-8 (UQ-8) biosynthesis, which is the condensation of the polyisoprenoid side chain with PHB, generating the first membrane-bound Q intermediate 3-octaprenyl-4-hydroxybenzoate. In Paracidovorax citrulli (strain AAC00-1) (Acidovorax citrulli), this protein is 4-hydroxybenzoate octaprenyltransferase.